The sequence spans 155 residues: Cytochrome c-type biogenesis protein CcmE (155 aa).

The Cytoplasmic segment spans residues 1 to 7; the sequence is MTRKQKR. Residues 8–28 form a helical; Signal-anchor for type II membrane protein membrane-spanning segment; that stretch reads LVVIAGGMSFILAAVLLVMFA. Over 29 to 155 the chain is Periplasmic; the sequence is FSQSVAYFYM…GKGQEAKATP (127 aa). The heme site is built by histidine 124 and tyrosine 128.

Belongs to the CcmE/CycJ family.

The protein localises to the cell inner membrane. In terms of biological role, heme chaperone required for the biogenesis of c-type cytochromes. Transiently binds heme delivered by CcmC and transfers the heme to apo-cytochromes in a process facilitated by CcmF and CcmH. The sequence is that of Cytochrome c-type biogenesis protein CcmE from Rhizobium etli (strain ATCC 51251 / DSM 11541 / JCM 21823 / NBRC 15573 / CFN 42).